A 183-amino-acid polypeptide reads, in one-letter code: Dual-action ribosomal maturation protein DarP (183 aa).

It belongs to the DarP family.

It is found in the cytoplasm. Functionally, member of a network of 50S ribosomal subunit biogenesis factors which assembles along the 30S-50S interface, preventing incorrect 23S rRNA structures from forming. Promotes peptidyl transferase center (PTC) maturation. The protein is Dual-action ribosomal maturation protein DarP of Shigella flexneri.